Consider the following 496-residue polypeptide: L-carnitine dehydrogenase/betainyl-CoA thioesterase (496 aa).

The L-carnitine dehydrogenase stretch occupies residues 1–335; the sequence is MTTITKAACI…KRLWEKGGSP (335 aa). Residue 11 to 16 coordinates NAD(+); the sequence is GGGVIG. Residues 336-496 form a betainyl-CoA thioesterase region; that stretch reads SKSLDASGPL…GAGRHVGQKR (161 aa).

This sequence in the N-terminal section; belongs to the 3-hydroxyacyl-CoA dehydrogenase family. L-carnitine dehydrogenase subfamily. The protein in the C-terminal section; belongs to the betainyl-CoA thioesterase family. Homodimer.

The protein localises to the cytoplasm. It catalyses the reaction carnitine + NAD(+) = 3-dehydrocarnitine + NADH + H(+). It carries out the reaction N,N,N-trimethylglycyl-CoA + H2O = glycine betaine + CoA + H(+). The protein operates within amine and polyamine metabolism; carnitine metabolism. Its function is as follows. Multifunctional enzyme that catalyzes the NAD(+)-dependent oxidation of L-carnitine to 3-dehydrocarnitine and the cleavage of betainyl-CoA (N,N,N-trimethylglycyl-CoA) into glycine betaine and coenzyme A. Can also hydrolyze L-carnitinyl-CoA, but with much lower efficiency. Is involved in a L-carnitine degradation pathway that allows R.meliloti to grow on L-carnitine as the sole source of carbon and nitrogen. This is L-carnitine dehydrogenase/betainyl-CoA thioesterase from Rhizobium meliloti (strain 1021) (Ensifer meliloti).